Here is an 825-residue protein sequence, read N- to C-terminus: Extracellular exo-alpha-L-arabinofuranosidase (825 aa).

An N-terminal signal peptide occupies residues 1-29; that stretch reads MSRIRWRYGTAATALLVAAGLVPTATAHA. Glu-58 is an alpha-L-arabinofuranose binding site. One can recognise a CBM-cenC domain in the interval 70 to 215; sequence AELVQNRSFE…ALDMVSLFPR (146 aa). Alpha-L-arabinofuranose contacts are provided by residues Cys-247 and 379 to 380; that span reads NE. The active-site Proton donor/acceptor is Glu-380.

This sequence belongs to the glycosyl hydrolase 51 family.

The protein resides in the secreted. It catalyses the reaction Hydrolysis of terminal non-reducing alpha-L-arabinofuranoside residues in alpha-L-arabinosides.. In terms of biological role, involved in the degradation of arabinan and is a key enzyme in the complete degradation of the plant cell wall. Catalyzes the cleavage of terminal alpha-L-arabinofuranosyl residues of arabinan present in the arabinofuranosyl polysaccharides or oligosaccharides. It cannot act on other arabinose-containing polysaccharides and arabinoxylo-oligosaccharides. It leaves most of the polymer intact, including most of the main-chain residues and the arabinose side chains. It acts preferentially on the linear alpha-(1-&gt;2)-linked arabinofuranobiosides and alpha-(1-&gt;3)-linked arabinofuranobiosides, and is much less effective on alpha-(1-&gt;5)-linked arabinofuranobiosides. It also hydrolyzes the terminal alpha-(1-&gt;3)-linked arabinofuranotriosides in preference to the alpha-(1-&gt;5)-linked arabinofuranotriosides. This Streptomyces chartreusis protein is Extracellular exo-alpha-L-arabinofuranosidase.